The following is a 130-amino-acid chain: MADRILVHRLAVFARHGVLPEEERLGQRFYISLECRLDLAPAGRSDDVAATVSYADLAEIALDIATNRRFALIEALAEAIAETCLARFPRIETIAVRIDKPSAPIPAVLDYAAIEIVRGRSDSVATTETR.

Residues glutamate 22, tyrosine 54, and 73 to 74 (IE) each bind substrate. The active-site Proton donor/acceptor is lysine 100.

This sequence belongs to the DHNA family.

The enzyme catalyses 7,8-dihydroneopterin = 6-hydroxymethyl-7,8-dihydropterin + glycolaldehyde. Its pathway is cofactor biosynthesis; tetrahydrofolate biosynthesis; 2-amino-4-hydroxy-6-hydroxymethyl-7,8-dihydropteridine diphosphate from 7,8-dihydroneopterin triphosphate: step 3/4. Functionally, catalyzes the conversion of 7,8-dihydroneopterin to 6-hydroxymethyl-7,8-dihydropterin. The chain is Dihydroneopterin aldolase (folB) from Methylorubrum extorquens (strain ATCC 14718 / DSM 1338 / JCM 2805 / NCIMB 9133 / AM1) (Methylobacterium extorquens).